The primary structure comprises 669 residues: MAAERSRSPVDSPVPASMFAPEPSSPGAARAAAAAARLHGGFDSDCSEDGEALNGEPELDLTSKLVLVSPTSEQYDSLLRQMWERMDEGCGETIYVIGQGSDGTEYGLSEADMEASYATVKSMAEQIEADVILLRERQESGGRVRDYLVRKRVGDNDFLEVRVAVVGNVDAGKSTLLGVLTHGELDNGRGFARQKLFRHKHEIESGRTSSVGNDILGFDSEGNVVNKPDSHGGSLEWTKICEKSSKVITFIDLAGHEKYLKTTVFGMTGHLPDFCMLMVGSNAGIVGMTKEHLGLALALNVPVFVVVTKIDMCPANILQETLKLLQRLLKSPGCRKIPVLVQSKDDVIVTASNFSSERMCPIFQISNVTGENLDLLKMFLNLLSPRTSYREEEPAEFQIDDTYSVPGVGTVVSGTTLRGLIKLNDTLLLGPDPLGNFLSIAVKSIHRKRMPVKEVRGGQTASFALKKIKRSSIRKGMVMVSPRLNPQASWEFEAEILVLHHPTTISPRYQAMVHCGSIRQTATILSMDKDCLRTGDKATVHFRFIKTPEYLHIDQRLVFREGRTKAVGTITKLLQTTNNSPMNSKPQQIKMQSTKKGPLSKREEGGPSGVPAAGPPSTGDEASSLGTTQAATSSGLQPQPKPSSGGRRRGGQRHKVKSQGACVTPASGC.

Positions 1-32 are disordered; the sequence is MAAERSRSPVDSPVPASMFAPEPSSPGAARAA. Phosphoserine occurs at positions 6, 8, 12, 24, 25, 44, 47, and 69. The tr-type G domain maps to 158-389; it reads FLEVRVAVVG…LNLLSPRTSY (232 aa). The segment at 167 to 174 is G1; that stretch reads GNVDAGKS. 167-174 provides a ligand contact to GTP; it reads GNVDAGKS. Residues 206–210 form a G2 region; sequence GRTSS. The tract at residues 252–255 is G3; it reads DLAG. GTP-binding positions include 252–256 and 308–311; these read DLAGH and TKID. Residues 308-311 are G4; the sequence is TKID. The tract at residues 366-368 is G5; it reads SNV. Polar residues-rich tracts occupy residues 573 to 595 and 620 to 637; these read LLQT…QSTK and DEAS…SGLQ. A disordered region spans residues 573-669; the sequence is LLQTTNNSPM…GACVTPASGC (97 aa). Phosphoserine is present on S580. Residues 646–657 are compositionally biased toward basic residues; sequence GRRRGGQRHKVK.

It belongs to the TRAFAC class translation factor GTPase superfamily. Classic translation factor GTPase family. GTPBP1 subfamily. In terms of assembly, interacts with EXOSC2/RRP4, EXOSC3/RRP40, EXOSC5/RRP46, HNRNPD, HNRNPR and SYNCRIP. Identified in a complex with HNRNPD, HNRNPL, HNRNPQ, HNRNPR, HNRNPU and AANAT mRNA, but does not bind mRNA by itself. As to expression, detected in pineal gland (at protein level).

Its subcellular location is the cytoplasm. Promotes degradation of target mRNA species. Plays a role in the regulation of circadian mRNA stability. Binds GTP and has GTPase activity. This chain is GTP-binding protein 1 (Gtpbp1), found in Rattus norvegicus (Rat).